Here is a 106-residue protein sequence, read N- to C-terminus: Small ribosomal subunit protein uS10 (106 aa).

The protein belongs to the universal ribosomal protein uS10 family. In terms of assembly, part of the 30S ribosomal subunit.

Its function is as follows. Involved in the binding of tRNA to the ribosomes. The polypeptide is Small ribosomal subunit protein uS10 (Synechococcus sp. (strain CC9311)).